The primary structure comprises 161 residues: NADH-quinone oxidoreductase subunit I (161 aa).

2 consecutive 4Fe-4S ferredoxin-type domains span residues 52–82 and 92–121; these read LRRY…IESE and SRYD…ETRV. The [4Fe-4S] cluster site is built by Cys62, Cys65, Cys68, Cys72, Cys101, Cys104, Cys107, and Cys111.

Belongs to the complex I 23 kDa subunit family. NDH-1 is composed of 14 different subunits. Subunits NuoA, H, J, K, L, M, N constitute the membrane sector of the complex. Requires [4Fe-4S] cluster as cofactor.

It is found in the cell inner membrane. It catalyses the reaction a quinone + NADH + 5 H(+)(in) = a quinol + NAD(+) + 4 H(+)(out). Its function is as follows. NDH-1 shuttles electrons from NADH, via FMN and iron-sulfur (Fe-S) centers, to quinones in the respiratory chain. The immediate electron acceptor for the enzyme in this species is believed to be ubiquinone. Couples the redox reaction to proton translocation (for every two electrons transferred, four hydrogen ions are translocated across the cytoplasmic membrane), and thus conserves the redox energy in a proton gradient. This Azoarcus sp. (strain BH72) protein is NADH-quinone oxidoreductase subunit I.